The sequence spans 542 residues: Chaperonin GroEL (542 aa).

ATP is bound by residues 29–32 (TIGP), 86–90 (DGTTT), Gly413, 477–479 (NAA), and Asp493.

It belongs to the chaperonin (HSP60) family. As to quaternary structure, forms a cylinder of 14 subunits composed of two heptameric rings stacked back-to-back. Interacts with the co-chaperonin GroES.

The protein resides in the cytoplasm. It carries out the reaction ATP + H2O + a folded polypeptide = ADP + phosphate + an unfolded polypeptide.. Functionally, together with its co-chaperonin GroES, plays an essential role in assisting protein folding. The GroEL-GroES system forms a nano-cage that allows encapsulation of the non-native substrate proteins and provides a physical environment optimized to promote and accelerate protein folding. In Lactobacillus acidophilus (strain ATCC 700396 / NCK56 / N2 / NCFM), this protein is Chaperonin GroEL.